Consider the following 393-residue polypeptide: Chorismate synthase (393 aa).

R40 and R46 together coordinate NADP(+). FMN contacts are provided by residues 129–131 (RSS), 249–250 (QA), G301, 316–320 (KPIPT), and R342.

Belongs to the chorismate synthase family. As to quaternary structure, homotetramer. It depends on FMNH2 as a cofactor.

It catalyses the reaction 5-O-(1-carboxyvinyl)-3-phosphoshikimate = chorismate + phosphate. Its pathway is metabolic intermediate biosynthesis; chorismate biosynthesis; chorismate from D-erythrose 4-phosphate and phosphoenolpyruvate: step 7/7. Catalyzes the anti-1,4-elimination of the C-3 phosphate and the C-6 proR hydrogen from 5-enolpyruvylshikimate-3-phosphate (EPSP) to yield chorismate, which is the branch point compound that serves as the starting substrate for the three terminal pathways of aromatic amino acid biosynthesis. This reaction introduces a second double bond into the aromatic ring system. The chain is Chorismate synthase from Geotalea daltonii (strain DSM 22248 / JCM 15807 / FRC-32) (Geobacter daltonii).